The sequence spans 471 residues: Cell division protein FtsP (471 aa).

The segment at residues 1-27 is a signal peptide (tat-type signal); sequence MSLNRRQFIQASGLALCAGMTPLAAKA. A Plastocyanin-like domain is found at 229–287; that stretch reads VRLRLLNASNSRRYVMRLSDGRAMNVIASDQGLLPAPMAVNQLSLAPGERREILIDMSQ.

It belongs to the FtsP family. Predicted to be exported by the Tat system. The position of the signal peptide cleavage has not been experimentally proven.

The protein localises to the periplasm. Its function is as follows. Cell division protein that is required for growth during stress conditions. May be involved in protecting or stabilizing the divisomal assembly under conditions of stress. This chain is Cell division protein FtsP, found in Pectobacterium atrosepticum (strain SCRI 1043 / ATCC BAA-672) (Erwinia carotovora subsp. atroseptica).